Reading from the N-terminus, the 86-residue chain is Selenoprotein W (86 aa).

Residues 10-13 constitute a cross-link (cysteinyl-selenocysteine (Cys-Sec); redox-active); the sequence is CGGU. Residue selenocysteine 13 is a non-standard amino acid, selenocysteine.

The protein belongs to the SelWTH family. Selenoprotein W subfamily.

The protein localises to the cytoplasm. In terms of biological role, plays a role as a glutathione (GSH)-dependent antioxidant. May be involved in a redox-related process. May play a role in the myopathies of selenium deficiency. The polypeptide is Selenoprotein W (Danio rerio (Zebrafish)).